The primary structure comprises 343 residues: Protein RecA (343 aa).

Residue 64–71 (GPESSGKT) participates in ATP binding.

Belongs to the RecA family.

The protein localises to the cytoplasm. Can catalyze the hydrolysis of ATP in the presence of single-stranded DNA, the ATP-dependent uptake of single-stranded DNA by duplex DNA, and the ATP-dependent hybridization of homologous single-stranded DNAs. It interacts with LexA causing its activation and leading to its autocatalytic cleavage. The polypeptide is Protein RecA (Cereibacter sphaeroides (strain ATCC 17023 / DSM 158 / JCM 6121 / CCUG 31486 / LMG 2827 / NBRC 12203 / NCIMB 8253 / ATH 2.4.1.) (Rhodobacter sphaeroides)).